We begin with the raw amino-acid sequence, 210 residues long: Na(+)-translocating NADH-quinone reductase subunit D (210 aa).

6 consecutive transmembrane segments (helical) span residues 11–31 (ILAP…VCSA), 42–62 (FVMT…VSLI), 72–92 (IIVQ…VLKA), 103–123 (VFVG…AFAM), 131–151 (FIDG…VGFF), and 178–198 (NGLM…IWAI).

It belongs to the NqrDE/RnfAE family. In terms of assembly, composed of six subunits; NqrA, NqrB, NqrC, NqrD, NqrE and NqrF.

It is found in the cell inner membrane. It catalyses the reaction a ubiquinone + n Na(+)(in) + NADH + H(+) = a ubiquinol + n Na(+)(out) + NAD(+). In terms of biological role, NQR complex catalyzes the reduction of ubiquinone-1 to ubiquinol by two successive reactions, coupled with the transport of Na(+) ions from the cytoplasm to the periplasm. NqrA to NqrE are probably involved in the second step, the conversion of ubisemiquinone to ubiquinol. The chain is Na(+)-translocating NADH-quinone reductase subunit D from Vibrio atlanticus (strain LGP32) (Vibrio splendidus (strain Mel32)).